Consider the following 757-residue polypeptide: Protein transport protein SEC23-2 (757 aa).

Zn(2+) is bound by residues Cys-56, Cys-61, Cys-80, and Cys-83.

This sequence belongs to the SEC23/SEC24 family. SEC23 subfamily. The COPII coat is composed of at least 5 proteins: the SEC23/24 complex, the SEC13/31 complex, and the protein SAR1.

The protein localises to the cytoplasm. The protein resides in the cytoplasmic vesicle. It is found in the COPII-coated vesicle membrane. It localises to the endoplasmic reticulum membrane. Its subcellular location is the golgi apparatus membrane. Functionally, component of the coat protein complex II (COPII) which promotes the formation of transport vesicles from the endoplasmic reticulum (ER). The coat has two main functions, the physical deformation of the endoplasmic reticulum membrane into vesicles and the selection of cargo molecules. This is Protein transport protein SEC23-2 (SEC232) from Candida glabrata (strain ATCC 2001 / BCRC 20586 / JCM 3761 / NBRC 0622 / NRRL Y-65 / CBS 138) (Yeast).